The chain runs to 114 residues: Amphinase-3 (114 aa).

The active-site Proton acceptor is H15. An N-linked (GlcNAc...) asparagine glycan is attached at N25. Cystine bridges form between C26/C79, C41/C85, C59/C100, and C97/C114. 42–46 (KPINT) is a binding site for substrate. N-linked (GlcNAc...) asparagine glycans are attached at residues N67 and N91. Catalysis depends on H107, which acts as the Proton donor.

It belongs to the pancreatic ribonuclease family. As to quaternary structure, monomer. There are at least five different forms arising from glycan heterogeneity.

It is found in the secreted. In terms of biological role, endonuclease, hydrolyzes highly polymerized RNA, poly(U) and poly(C), and the dinucleotides CpA and UpA. More active towards rCA than rUA or rUG. Has cytotoxic activity against cultured human submaxillary gland carcinoma cells. This is Amphinase-3 from Lithobates pipiens (Northern leopard frog).